The following is a 341-amino-acid chain: S-adenosylmethionine:tRNA ribosyltransferase-isomerase (341 aa).

Belongs to the QueA family. Monomer.

It is found in the cytoplasm. It carries out the reaction 7-aminomethyl-7-carbaguanosine(34) in tRNA + S-adenosyl-L-methionine = epoxyqueuosine(34) in tRNA + adenine + L-methionine + 2 H(+). Its pathway is tRNA modification; tRNA-queuosine biosynthesis. Functionally, transfers and isomerizes the ribose moiety from AdoMet to the 7-aminomethyl group of 7-deazaguanine (preQ1-tRNA) to give epoxyqueuosine (oQ-tRNA). The chain is S-adenosylmethionine:tRNA ribosyltransferase-isomerase from Staphylococcus haemolyticus (strain JCSC1435).